We begin with the raw amino-acid sequence, 184 residues long: Ribosome maturation factor RimM (184 aa).

The PRC barrel domain maps to 101–180 (EGEFFYCDLV…KITTHNAKTL (80 aa)).

Belongs to the RimM family. Binds ribosomal protein uS19.

It is found in the cytoplasm. In terms of biological role, an accessory protein needed during the final step in the assembly of 30S ribosomal subunit, possibly for assembly of the head region. Essential for efficient processing of 16S rRNA. May be needed both before and after RbfA during the maturation of 16S rRNA. It has affinity for free ribosomal 30S subunits but not for 70S ribosomes. This is Ribosome maturation factor RimM from Helicobacter pylori (strain ATCC 700392 / 26695) (Campylobacter pylori).